A 423-amino-acid polypeptide reads, in one-letter code: Endochitinase 1 (423 aa).

A signal peptide spans 1–22; the sequence is MPSLFAQSLAIIATLQATLGLA. Residues 39–401 form the GH18 domain; it reads YVNAVYFTNW…GTSSNKLGGP (363 aa). N-linked (GlcNAc...) asparagine glycosylation is found at asparagine 74, asparagine 78, and asparagine 96. Chitin-binding positions include 103–104 and 130–133; these read GT and GGWT. The active-site Proton donor is glutamate 172. Chitin is bound by residues tyrosine 173 and 238–241; that span reads MAYD. Residue asparagine 248 is glycosylated (N-linked (GlcNAc...) asparagine). Tryptophan 378 provides a ligand contact to chitin. The disordered stretch occupies residues 380–423; it reads ASSDRSGSQSLIGTSSNKLGGPDSTENLLNYPDSKYDNMRKQMA. The segment covering 383-407 has biased composition (polar residues); it reads DRSGSQSLIGTSSNKLGGPDSTENL. The segment covering 413–423 has biased composition (basic and acidic residues); sequence SKYDNMRKQMA.

Belongs to the glycosyl hydrolase 18 family. Chitinase class V subfamily.

The protein localises to the secreted. It catalyses the reaction Random endo-hydrolysis of N-acetyl-beta-D-glucosaminide (1-&gt;4)-beta-linkages in chitin and chitodextrins.. Its function is as follows. Secreted chitinase involved in the degradation of chitin, a component of the cell walls of fungi and exoskeletal elements of some animals (including worms and arthropods). Participates in the infection process and directly acts in the penetration process of the host cuticle. This is Endochitinase 1 (chit1) from Metarhizium anisopliae (Entomophthora anisopliae).